Here is a 324-residue protein sequence, read N- to C-terminus: NADH-ubiquinone oxidoreductase chain 1 (324 aa).

Transmembrane regions (helical) follow at residues 9 to 29 (LINP…LTLL), 76 to 96 (LFLV…APMP), 106 to 126 (LGVL…LGSG), 146 to 166 (ISYE…WGGY), 177 to 197 (ALWL…STLA), 228 to 248 (LLFL…AILF), 259 to 279 (ELTT…FLWV), and 299 to 319 (FLPL…AFAG).

Belongs to the complex I subunit 1 family.

The protein localises to the mitochondrion inner membrane. The enzyme catalyses a ubiquinone + NADH + 5 H(+)(in) = a ubiquinol + NAD(+) + 4 H(+)(out). Core subunit of the mitochondrial membrane respiratory chain NADH dehydrogenase (Complex I) that is believed to belong to the minimal assembly required for catalysis. Complex I functions in the transfer of electrons from NADH to the respiratory chain. The immediate electron acceptor for the enzyme is believed to be ubiquinone. In Formosania lacustris (Oriental stream loach), this protein is NADH-ubiquinone oxidoreductase chain 1 (MT-ND1).